The chain runs to 460 residues: GTPase Der (460 aa).

2 consecutive EngA-type G domains span residues 2-164 (QSII…HEEF) and 196-368 (IRVG…ENFT). GTP is bound by residues 8 to 15 (GKPNVGKS), 55 to 59 (DSGGL), 116 to 119 (NKVD), 202 to 209 (GRVNVGKS), 249 to 253 (DTAGI), and 313 to 316 (NKWD). In terms of domain architecture, KH-like spans 369–453 (QKIQTSKLNT…PLVIASRKKG (85 aa)).

Belongs to the TRAFAC class TrmE-Era-EngA-EngB-Septin-like GTPase superfamily. EngA (Der) GTPase family. Associates with the 50S ribosomal subunit.

Its function is as follows. GTPase that plays an essential role in the late steps of ribosome biogenesis. The chain is GTPase Der from Campylobacter jejuni subsp. jejuni serotype O:6 (strain 81116 / NCTC 11828).